The sequence spans 610 residues: Zinc metalloproteinase-disintegrin-like BITM06A (610 aa).

A signal peptide spans 1 to 20 (MIQVLLVTICLAAFPYQGSS). A propeptide spanning residues 21–189 (IILESGNVND…KKASQLVVTA (169 aa)) is cleaved from the precursor. The region spanning 198 to 394 (RYVELFIVVD…ENPQCILNEP (197 aa)) is the Peptidase M12B domain. Ca(2+) contacts are provided by E201 and D285. 3 disulfides stabilise this stretch: C309-C389, C349-C373, and C351-C356. Residue H334 coordinates Zn(2+). The active site involves E335. Zn(2+) contacts are provided by H338 and H344. N-linked (GlcNAc...) asparagine glycosylation is present at N372. Positions 389, 392, 404, 407, 409, 411, 414, and 417 each coordinate Ca(2+). The region spanning 402–488 (PPVCGNELLE…ECPADVFHKN (87 aa)) is the Disintegrin domain. Intrachain disulfides connect C405/C434, C416/C429, C418/C424, C428/C451, C442/C448, C447/C473, C460/C480, C467/C499, C492/C504, C511/C561, C526/C572, C539/C549, C556/C598, and C592/C603. The D/ECD-tripeptide motif lies at 466-468 (ECD). D468, P469, E471, D483, and V484 together coordinate Ca(2+).

It belongs to the venom metalloproteinase (M12B) family. P-III subfamily. P-IIIa sub-subfamily. Monomer. It depends on Zn(2+) as a cofactor. In terms of tissue distribution, expressed by the venom gland.

The protein resides in the secreted. In terms of biological role, snake venom metalloproteinase that impairs hemostasis in the envenomed animal. The chain is Zinc metalloproteinase-disintegrin-like BITM06A from Bothrops insularis (Golden lancehead).